Reading from the N-terminus, the 469-residue chain is GTPase Der (469 aa).

2 EngA-type G domains span residues 30–193 (PVLA…PEVA) and 203–376 (RRVA…ASWD). GTP is bound by residues 36–43 (GRPNVGKS), 83–87 (DTGGW), 145–148 (NKVD), 209–216 (GKPNVGKS), 256–260 (DTAGL), and 321–324 (NKWD). The KH-like domain maps to 377-459 (TRIPTGPLNS…PIRINVRVRE (83 aa)).

The protein belongs to the TRAFAC class TrmE-Era-EngA-EngB-Septin-like GTPase superfamily. EngA (Der) GTPase family. In terms of assembly, associates with the 50S ribosomal subunit.

In terms of biological role, GTPase that plays an essential role in the late steps of ribosome biogenesis. The protein is GTPase Der of Mycobacterium ulcerans (strain Agy99).